Consider the following 1561-residue polypeptide: Adhesion G protein-coupled receptor B2 (1561 aa).

The signal sequence occupies residues 1–20 (MTPACPLLLSVILSLRLATA). Residues 21–930 (FDPAPSACSA…ELAGAPSVPL (910 aa)) lie on the Extracellular side of the membrane. N94, N182, and N183 each carry an N-linked (GlcNAc...) asparagine glycan. O-linked (Xyl...) (chondroitin sulfate) serine glycosylation occurs at S257. TSP type-1 domains follow at residues 300–353 (DPAA…ATCP), 355–408 (HGVW…AACP), 410–463 (EGQW…LDCP), and 466–519 (DGKW…KRCP). 14 disulfide bridges follow: C312–C346, C316–C352, C327–C336, C367–C402, C371–C407, C382–C392, C422–C457, C426–C462, C437–C447, C478–C513, C482–C518, C493–C503, C525–C560, and C548–C578. The N-linked (GlcNAc...) asparagine glycan is linked to N347. Residue N428 is glycosylated (N-linked (GlcNAc...) asparagine). Residues N551 and N636 are each glycosylated (N-linked (GlcNAc...) asparagine). A GAIN-B domain is found at 748 to 918 (DRLFLPKEVL…AVLAQPPKDL (171 aa)). The interval 757-797 (LSLSSPGKPATPGAATAGSPGRGRGPGTVPPGPGHAHQRLL) is disordered. Low complexity predominate over residues 760-775 (SSPGKPATPGAATAGS). The N-linked (GlcNAc...) asparagine glycan is linked to N861. Intrachain disulfides connect C868–C900 and C888–C902. The tract at residues 868–918 (CASWDYSRADTNSGDWNTESCQTLETQAAHTRCQCQHLSTFAVLAQPPKDL) is GPS. The chain crosses the membrane as a helical span at residues 931–951 (VIGCAVSCMALLTLLAIYAAF). Residues 952–959 (WRFIKSER) lie on the Cytoplasmic side of the membrane. Residues 960–980 (SIILLNFCLSILASNILILVG) traverse the membrane as a helical segment. The Extracellular segment spans residues 981–988 (QSRVLSKG). Residues 989–1009 (VCTMTAAFLHFFFLSSFCWVL) form a helical membrane-spanning segment. The Cytoplasmic segment spans residues 1010 to 1030 (TEAWQSYLAVIGRMRTRLVRK). A helical transmembrane segment spans residues 1031–1051 (RFLCLGWGLPALVVAVSVGFT). Topologically, residues 1052-1072 (RTKGYGTSSYCWLSLEGGLLY) are extracellular. A helical transmembrane segment spans residues 1073–1093 (AFVGPAAVIVLVNMLIGIIVF). Residues 1094 to 1115 (NKLMARDGVSDKSKKQRAGSER) are Cytoplasmic-facing. A helical membrane pass occupies residues 1116–1136 (CPWASLLLPCSACGAVPSPLL). The Extracellular portion of the chain corresponds to 1137–1147 (SSASARNAMAS). The helical transmembrane segment at 1148–1168 (LWSSCVVLPLLALTWMSAVLA) threads the bilayer. The Cytoplasmic segment spans residues 1169–1561 (MTDRRSVLFQ…PPDGDFQTEV (393 aa)). Residue Y1345 is modified to Phosphotyrosine. Disordered regions lie at residues 1355 to 1377 (LQPG…GTPR), 1417 to 1447 (FQPP…PGST), and 1491 to 1561 (RYRS…QTEV). The span at 1366-1376 (EAPRARPEGTP) shows a compositional bias: basic and acidic residues. A compositionally biased stretch (basic and acidic residues) spans 1491-1502 (RYRSQSSAKEKP). The span at 1519 to 1528 (SWSTFKSMTL) shows a compositional bias: polar residues. Positions 1551–1561 (EPPDGDFQTEV) are enriched in acidic residues.

The protein belongs to the G-protein coupled receptor 2 family. Adhesion G-protein coupled receptor (ADGR) subfamily. As to quaternary structure, heterodimer of 2 chains generated by proteolytic processing; the large extracellular N-terminal fragment and the membrane-bound C-terminal fragment predominantly remain associated and non-covalently linked. Interacts with GABPB2. Interacts (via carboxy-terminus) with TAX1BP3. Interacts with GNAZ. Interacts with SH3GL2. Post-translationally, glycosylated. In terms of processing, autoproteolytically processed at the GPS region of the GAIN-B domain; this cleavage modulates receptor activity. Additionally, furin is involved in the cleavage at another site, in the middle of the extracellular domain, generating a soluble fragment. Specifically expressed in the brain. The peak level in the brain is observed 10 days after birth.

Its subcellular location is the cell membrane. The protein resides in the secreted. With respect to regulation, receptor activity is regulated by proteolytic processing. The long N-terminal has a an inhibitory effect on the constitutive signaling activity. Removal of the N-terminal region induces an increase of the receptor activity. Its function is as follows. Orphan G-protein coupled receptor involved in cell adhesion and probably in cell-cell interactions. Activates NFAT-signaling pathway, a transcription factor, via the G-protein GNAZ. Involved in angiogenesis inhibition. The chain is Adhesion G protein-coupled receptor B2 (Adgrb2) from Mus musculus (Mouse).